Here is a 301-residue protein sequence, read N- to C-terminus: MTLDRDAASHVAEVLSEALPYIRRFVGKTLVIKYGGNAMESEELKTGFARDIVLMKAVGINPVVVHGGGPQIGDLLKRLSIESHFIDGMRVTDAATMDVVEMVLGGQVNKDIVNLINRHGGSAIGLTGKDAELIRAKKLTVSRQTPEMTQPEIIDIGHVGEVVSVNTDLLNMLVKGDFIPVIAPIGVGANGESYNINADLVAGKVAEALKAEKLMLLTNIAGLMDKQGQVLTGLTTEQVNELIADGTIYGGMLPKIKCALEAVQGGVNSSHIIDGRVPNAVLLEIFTDSGVGTLITNRKPR.

Substrate contacts are provided by residues 68 to 69 (GG), R90, and N195.

It belongs to the acetylglutamate kinase family. ArgB subfamily.

Its subcellular location is the cytoplasm. The catalysed reaction is N-acetyl-L-glutamate + ATP = N-acetyl-L-glutamyl 5-phosphate + ADP. It functions in the pathway amino-acid biosynthesis; L-arginine biosynthesis; N(2)-acetyl-L-ornithine from L-glutamate: step 2/4. Functionally, catalyzes the ATP-dependent phosphorylation of N-acetyl-L-glutamate. This is Acetylglutamate kinase from Pseudomonas putida (strain W619).